We begin with the raw amino-acid sequence, 79 residues long: Conotoxin 1 (79 aa).

The first 22 residues, 1-22, serve as a signal peptide directing secretion; it reads MKLTCVLIITVLFLTASQLITA. Positions 23–46 are excised as a propeptide; that stretch reads DYSRDQRQYRAVRLGDEMRTFKGA. 3 cysteine pairs are disulfide-bonded: Cys-49–Cys-62, Cys-56–Cys-67, and Cys-61–Cys-77.

It belongs to the conotoxin O1 superfamily. Expressed by the venom duct.

Its subcellular location is the secreted. The polypeptide is Conotoxin 1 (Conus vexillum (Flag cone)).